The sequence spans 140 residues: Large ribosomal subunit protein uL11 (140 aa).

Belongs to the universal ribosomal protein uL11 family. Part of the ribosomal stalk of the 50S ribosomal subunit. Interacts with L10 and the large rRNA to form the base of the stalk. L10 forms an elongated spine to which L12 dimers bind in a sequential fashion forming a multimeric L10(L12)X complex. Post-translationally, one or more lysine residues are methylated.

Functionally, forms part of the ribosomal stalk which helps the ribosome interact with GTP-bound translation factors. This Geobacter sp. (strain M21) protein is Large ribosomal subunit protein uL11.